Reading from the N-terminus, the 314-residue chain is Chitinase 1 (314 aa).

Positions 1–26 (MASVSPSSLLLLFFALLSPLLPLTSA) are cleaved as a signal peptide. In terms of domain architecture, GH18 spans 27–296 (LVFREYIGSQ…NVFRYEMQAQ (270 aa)). The active-site Proton donor is the Glu-151.

This sequence belongs to the glycosyl hydrolase 18 family. Chitinase class II subfamily.

It carries out the reaction Random endo-hydrolysis of N-acetyl-beta-D-glucosaminide (1-&gt;4)-beta-linkages in chitin and chitodextrins.. In terms of biological role, able to cleave glycolchitin. The sequence is that of Chitinase 1 from Tulipa saxatilis subsp. bakeri (Tulip).